Here is a 423-residue protein sequence, read N- to C-terminus: uncharacterized protein (423 aa).

The protein belongs to the IIV-6 198R family.

This is an uncharacterized protein from Aedes vexans (Inland floodwater mosquito).